The chain runs to 377 residues: DNA methyltransferase CcrM (377 aa).

Residues 271–373 (LGKAELTVMT…LRKVIRDQMA (103 aa)) enclose the RAMA domain.

Belongs to the N(4)/N(6)-methyltransferase family.

It catalyses the reaction a 2'-deoxyadenosine in DNA + S-adenosyl-L-methionine = an N(6)-methyl-2'-deoxyadenosine in DNA + S-adenosyl-L-homocysteine + H(+). Functionally, a beta subtype methylase that recognizes the double-stranded sequence 5'-GANTC-3' and methylates A-2 on both strands. CcrM-mediated methylation has important cellular functions. Contributes to the accurate cell-cycle control of DNA replication and cellular morphology. In Brucella anthropi (strain ATCC 49188 / DSM 6882 / CCUG 24695 / JCM 21032 / LMG 3331 / NBRC 15819 / NCTC 12168 / Alc 37) (Ochrobactrum anthropi), this protein is DNA methyltransferase CcrM (ccrM).